A 314-amino-acid chain; its full sequence is Hydroxyethylthiazole kinase (314 aa).

Position 70 (Met-70) interacts with substrate. ATP-binding residues include Arg-145 and Ser-217. Position 244 (Gly-244) interacts with substrate.

Belongs to the Thz kinase family. Mg(2+) serves as cofactor.

The catalysed reaction is 5-(2-hydroxyethyl)-4-methylthiazole + ATP = 4-methyl-5-(2-phosphooxyethyl)-thiazole + ADP + H(+). Its pathway is cofactor biosynthesis; thiamine diphosphate biosynthesis; 4-methyl-5-(2-phosphoethyl)-thiazole from 5-(2-hydroxyethyl)-4-methylthiazole: step 1/1. Functionally, catalyzes the phosphorylation of the hydroxyl group of 4-methyl-5-beta-hydroxyethylthiazole (THZ). The chain is Hydroxyethylthiazole kinase from Bifidobacterium longum (strain DJO10A).